Here is a 441-residue protein sequence, read N- to C-terminus: Ribosomal protein uS12 methylthiotransferase RimO (441 aa).

The MTTase N-terminal domain maps to 7 to 117 (PKISFVSLGC…VLEAVHRASP (111 aa)). 6 residues coordinate [4Fe-4S] cluster: Cys-16, Cys-52, Cys-81, Cys-148, Cys-152, and Cys-155. The Radical SAM core domain occupies 134-371 (LTPRHYAYLK…MARQQKISAR (238 aa)). In terms of domain architecture, TRAM spans 374–440 (KRKVGTRQQI…EYDLHGTVAG (67 aa)).

The protein belongs to the methylthiotransferase family. RimO subfamily. [4Fe-4S] cluster is required as a cofactor.

Its subcellular location is the cytoplasm. The catalysed reaction is L-aspartate(89)-[ribosomal protein uS12]-hydrogen + (sulfur carrier)-SH + AH2 + 2 S-adenosyl-L-methionine = 3-methylsulfanyl-L-aspartate(89)-[ribosomal protein uS12]-hydrogen + (sulfur carrier)-H + 5'-deoxyadenosine + L-methionine + A + S-adenosyl-L-homocysteine + 2 H(+). In terms of biological role, catalyzes the methylthiolation of an aspartic acid residue of ribosomal protein uS12. This Bradyrhizobium sp. (strain BTAi1 / ATCC BAA-1182) protein is Ribosomal protein uS12 methylthiotransferase RimO.